The following is a 1185-amino-acid chain: Chromosome partition protein Smc (1185 aa).

ATP is bound at residue 32–39 (PNGSGKSN). Positions 228–503 (SRLVKKLTIA…LQAVQERYTN (276 aa)) form a coiled coil. The interval 300–323 (TQGQQGVDAERRQNQQSEQERLTA) is disordered. Positions 307 to 320 (DAERRQNQQSEQER) are enriched in basic and acidic residues. In terms of domain architecture, SMC hinge spans 519-637 (SGVAGAVSEL…VDTLDHAMAI (119 aa)). 2 coiled-coil regions span residues 675-928 (QQQQ…RRLE) and 989-1025 (AIDE…ADLD).

This sequence belongs to the SMC family. As to quaternary structure, homodimer.

The protein localises to the cytoplasm. Required for chromosome condensation and partitioning. The polypeptide is Chromosome partition protein Smc (Lactiplantibacillus plantarum (strain ATCC BAA-793 / NCIMB 8826 / WCFS1) (Lactobacillus plantarum)).